The sequence spans 252 residues: Probable phosphatase Shewana3_2794 (252 aa).

Positions 8, 10, 16, 41, 74, 102, 132, 193, and 195 each coordinate Zn(2+).

The protein belongs to the PHP family. Zn(2+) serves as cofactor.

This is Probable phosphatase Shewana3_2794 from Shewanella sp. (strain ANA-3).